The primary structure comprises 70 residues: Protein SlyX homolog (70 aa).

This sequence belongs to the SlyX family.

This chain is Protein SlyX homolog, found in Shewanella putrefaciens (strain CN-32 / ATCC BAA-453).